The chain runs to 438 residues: MVDIIKTNATFKAGKGNKGTLSFEIPAKQISSGIDQAFNKQKDKINIPGFRKGHVSKELFLARFGEEALYEDALNAILPDIYDQAVNEADITVVGQPQIIPDDLKHGGPSKIHAEVTLAPTVELGDYKGVEVEKESDEVSDKELNAELERLQKGEAELVPAKEDQVSEKGDTVVIDFDGSVDGKQFDGGKAQNFSLSLGSGQFIPGFEDQLVGHKAGDDVDVKVTFPKDYQAKNLAGKEAVFAVTIHELKKLETPALDNEFAKDVDDSVLVLEELKAKTKEKLAKDKAEKNKDAFEDAAIQKVVDGAKINPEKLPEEMINDDVSRQMQTFFNNLAGQGVKPEMYFQIPNQPGAVKATNDRRRTNRVKTNLVLEEIARVEKINPSNEEIDKEIKSLASEYNIKESEVEKSVSAGMLSHDLKVQQAVELIVNSAQAVEKK.

The 86-residue stretch at 170–255 folds into the PPIase FKBP-type domain; that stretch reads GDTVVIDFDG…IHELKKLETP (86 aa).

Belongs to the FKBP-type PPIase family. Tig subfamily.

It localises to the cytoplasm. It catalyses the reaction [protein]-peptidylproline (omega=180) = [protein]-peptidylproline (omega=0). Involved in protein export. Acts as a chaperone by maintaining the newly synthesized protein in an open conformation. Functions as a peptidyl-prolyl cis-trans isomerase. The chain is Trigger factor (tig) from Oenococcus oeni (Leuconostoc oenos).